A 73-amino-acid chain; its full sequence is Putative antitoxin M1627_0365 (73 aa).

The protein belongs to the UPF0330 family.

Its function is as follows. Possibly the antitoxin component of a type II toxin-antitoxin (TA) system. The protein is Putative antitoxin M1627_0365 of Saccharolobus islandicus (strain M.16.27) (Sulfolobus islandicus).